Consider the following 799-residue polypeptide: High affinity nerve growth factor receptor (799 aa).

The N-terminal stretch at 1 to 32 (MLRGQRHGQLGWHRPAAGLGGLVTSLMLACAC) is a signal peptide. The Extracellular segment spans residues 33-418 (AASCRETCCP…DPVEKKDETP (386 aa)). 2 cysteine pairs are disulfide-bonded: cysteine 36–cysteine 41 and cysteine 40–cysteine 50. Residue asparagine 67 is glycosylated (N-linked (GlcNAc...) asparagine). LRR repeat units lie at residues 90–113 (LGELRSLTIVKSGLRFVAPDAFHF) and 116–137 (RLSHLNLSSNALESLSWKTVQG). 10 N-linked (GlcNAc...) asparagine glycosylation sites follow: asparagine 121, asparagine 190, asparagine 204, asparagine 255, asparagine 264, asparagine 320, asparagine 325, asparagine 341, asparagine 361, and asparagine 404. Residues 148–219 (NPLHCSCALL…GDDVFLQCQV (72 aa)) form the LRRCT domain. Cysteine 154 and cysteine 193 form a disulfide bridge. Ig-like C2-type domains are found at residues 196–285 (PSVK…VSVS) and 295–368 (AVEQ…LAAN). 2 cysteine pairs are disulfide-bonded: cysteine 217-cysteine 267 and cysteine 302-cysteine 348. Residues 419–442 (FGVSVAVGLAVSAALFLSALLLVL) traverse the membrane as a helical segment. Residues 443-799 (NKCGQRSKFG…APPSYLDVLG (357 aa)) are Cytoplasmic-facing. The interaction with SQSTM1 stretch occupies residues 472–493 (MTLGGSSLSPTEGKGSGLQGHI). Position 499 is a phosphotyrosine; by autocatalysis (tyrosine 499). The Protein kinase domain occupies 513 to 784 (IILKWELGEG…LSMKDVHARL (272 aa)). ATP contacts are provided by residues 519 to 527 (LGEGAFGKV) and lysine 547. The active-site Proton acceptor is the aspartate 653. Residues tyrosine 679, tyrosine 683, tyrosine 684, and tyrosine 794 each carry the phosphotyrosine; by autocatalysis modification.

This sequence belongs to the protein kinase superfamily. Tyr protein kinase family. Insulin receptor subfamily. In terms of assembly, exists in a dynamic equilibrium between monomeric (low affinity) and dimeric (high affinity) structures. Homodimerization is induced by binding of a NGF dimer. Found in a complex, at least composed of KIDINS220, MAGI2, NTRK1 and RAPGEF2; the complex is mainly formed at late endosomes in a nerve growth factor (NGF)-dependent manner. Interacts with RAPGEF2; the interaction is strengthened after NGF stimulation. Interacts with SQSTM1; bridges NTRK1 to NGFR. Forms a ternary complex with NGFR and KIDINS220; this complex is affected by the expression levels of KIDINS220 and an increase in KIDINS220 expression leads to a decreased association of NGFR and NTRK1. Interacts (phosphorylated upon activation by NGF) with SHC1; mediates SHC1 phosphorylation and activation. Interacts (phosphorylated upon activation by NGF) with PLCG1; mediates PLCG1 phosphorylation and activation. Interacts (phosphorylated) with SH2B1 and SH2B2. Interacts with GRB2. Interacts with PIK3R1. Interacts with FRS2. Interacts with SORT1; may regulate NTRK1 anterograde axonal transport. Interacts with SH2D1A; regulates NTRK1. Interacts with NRADD. Interacts with RAB7A. Interacts with PTPRS. Interacts with USP36; USP36 does not deubiquitinate NTRK1. Interacts with GGA3. Interacts with TSPAN1; this interaction promotes NTRK1 stability. In terms of processing, ligand-mediated autophosphorylation. Interaction with SQSTM1 is phosphotyrosine-dependent. Autophosphorylation at Tyr-499 mediates interaction and phosphorylation of SHC1. N-glycosylated. Post-translationally, ubiquitinated. Undergoes polyubiquitination upon activation; regulated by NGFR. Ubiquitination by NEDD4L leads to degradation. Ubiquitination regulates the internalization of the receptor. As to expression, isoform Trka-II is primarily expressed in neuronal cells; isoform Trka-I is found in non-neuronal tissues.

It is found in the cell membrane. The protein resides in the early endosome membrane. The protein localises to the late endosome membrane. Its subcellular location is the recycling endosome membrane. The enzyme catalyses L-tyrosyl-[protein] + ATP = O-phospho-L-tyrosyl-[protein] + ADP + H(+). The pro-survival signaling effect of NTRK1 in neurons requires its endocytosis into signaling early endosomes and its retrograde axonal transport. This is regulated by different proteins including CFL1, RAC1 and SORT1. NTF3 is unable to induce this signaling probably due to the lability of the NTF3-NTRK1 complex in endosomes. SH2D1A inhibits the autophosphorylation of the receptor, and alters the recruitment and activation of downstream effectors and signaling cascades. Regulated by NGFR. In terms of biological role, receptor tyrosine kinase involved in the development and the maturation of the central and peripheral nervous systems through regulation of proliferation, differentiation and survival of sympathetic and nervous neurons. High affinity receptor for NGF which is its primary ligand. Can also bind and be activated by NTF3/neurotrophin-3. However, NTF3 only supports axonal extension through NTRK1 but has no effect on neuron survival. Upon dimeric NGF ligand-binding, undergoes homodimerization, autophosphorylation and activation. Recruits, phosphorylates and/or activates several downstream effectors including SHC1, FRS2, SH2B1, SH2B2 and PLCG1 that regulate distinct overlapping signaling cascades driving cell survival and differentiation. Through SHC1 and FRS2 activates a GRB2-Ras-MAPK cascade that regulates cell differentiation and survival. Through PLCG1 controls NF-Kappa-B activation and the transcription of genes involved in cell survival. Through SHC1 and SH2B1 controls a Ras-PI3 kinase-AKT1 signaling cascade that is also regulating survival. In absence of ligand and activation, may promote cell death, making the survival of neurons dependent on trophic factors. The polypeptide is High affinity nerve growth factor receptor (Ntrk1) (Rattus norvegicus (Rat)).